The sequence spans 342 residues: Phosphate acyltransferase (342 aa).

The protein belongs to the PlsX family. In terms of assembly, homodimer. Probably interacts with PlsY.

It localises to the cytoplasm. The enzyme catalyses a fatty acyl-[ACP] + phosphate = an acyl phosphate + holo-[ACP]. Its pathway is lipid metabolism; phospholipid metabolism. In terms of biological role, catalyzes the reversible formation of acyl-phosphate (acyl-PO(4)) from acyl-[acyl-carrier-protein] (acyl-ACP). This enzyme utilizes acyl-ACP as fatty acyl donor, but not acyl-CoA. In Trichormus variabilis (strain ATCC 29413 / PCC 7937) (Anabaena variabilis), this protein is Phosphate acyltransferase.